A 399-amino-acid chain; its full sequence is Glutathione-independent formaldehyde dehydrogenase (399 aa).

Residue Cys-47 participates in Zn(2+) binding. NAD(+) contacts are provided by Gly-48, Ser-49, and His-52. Zn(2+) contacts are provided by His-68, Cys-98, Cys-101, Cys-104, Cys-112, and Asp-170. NAD(+) contacts are provided by Val-198, Asp-218, Arg-223, Val-263, Arg-268, Pro-300, Gln-338, and Thr-339.

The protein belongs to the zinc-containing alcohol dehydrogenase family. In terms of assembly, homotetramer. Requires Zn(2+) as cofactor.

It carries out the reaction formaldehyde + NAD(+) + H2O = formate + NADH + 2 H(+). It catalyses the reaction acetaldehyde + NAD(+) + H2O = acetate + NADH + 2 H(+). Its function is as follows. Dehydrogenase that catalyzes the NAD(+)-dependent oxidation of formaldehyde and acetaldehyde. Shows no detectable activity against either aldehydes with longer carbon chains or ethanol. In Pseudomonas aeruginosa (strain LESB58), this protein is Glutathione-independent formaldehyde dehydrogenase.